Reading from the N-terminus, the 1415-residue chain is DNA-directed RNA polymerase subunit beta' (1415 aa).

Residues C69, C71, C84, and C87 each contribute to the Zn(2+) site. Mg(2+)-binding residues include D461, D463, and D465. C805, C879, C886, and C889 together coordinate Zn(2+).

Belongs to the RNA polymerase beta' chain family. The RNAP catalytic core consists of 2 alpha, 1 beta, 1 beta' and 1 omega subunit. When a sigma factor is associated with the core the holoenzyme is formed, which can initiate transcription. Mg(2+) serves as cofactor. The cofactor is Zn(2+).

It carries out the reaction RNA(n) + a ribonucleoside 5'-triphosphate = RNA(n+1) + diphosphate. Its function is as follows. DNA-dependent RNA polymerase catalyzes the transcription of DNA into RNA using the four ribonucleoside triphosphates as substrates. This Anaplasma marginale (strain Florida) protein is DNA-directed RNA polymerase subunit beta'.